A 397-amino-acid chain; its full sequence is MTKTIAINAGSSSLKWQLYEMPEEVVLAKGLIERIGLRDSVSTVKFADRSESQTLDIADHVQAVKILLDDLIRFDIIKSYDEITGVGHRVVAGGEYFKESSLVDEYALAKIEELSASAPLHNPGAASGIRAFKELLPDITSVAVFDTAFHTSMPEVAYRYPVPNRYYTDYQVRKYGAHGTSHQYVSQEAAKLLGKPIEETKIITAHVGNGVSITAVDGGKSVDTSMGLTPLGGVMMGTRTGDLDPAIIPFIIDREPDMADAERIRHVFNKESGLLGISEKSSDMRDIIAGKEAGDEKCTLAYDLYVDRLRKYIAQYFGVMNGADAIVFTAGIGENSADVRASVLDGLTWFGIEVDPEKNVFGRVGDITTADSAVKVFVIPTDEELVIARDVERLKTK.

Mg(2+) is bound at residue Asn-8. Residue Lys-15 participates in ATP binding. Arg-89 provides a ligand contact to substrate. Asp-146 acts as the Proton donor/acceptor in catalysis. ATP-binding positions include 206–210 (HVGNG), 283–285 (DMR), and 331–335 (GIGEN). Position 383 (Glu-383) interacts with Mg(2+).

It belongs to the acetokinase family. In terms of assembly, homodimer. It depends on Mg(2+) as a cofactor. Mn(2+) serves as cofactor.

It is found in the cytoplasm. The catalysed reaction is acetate + ATP = acetyl phosphate + ADP. It functions in the pathway metabolic intermediate biosynthesis; acetyl-CoA biosynthesis; acetyl-CoA from acetate: step 1/2. Its function is as follows. Catalyzes the formation of acetyl phosphate from acetate and ATP. Can also catalyze the reverse reaction. The sequence is that of Acetate kinase from Streptococcus thermophilus (strain ATCC BAA-491 / LMD-9).